We begin with the raw amino-acid sequence, 344 residues long: MTSAAITPPTTVDRPMTDPFGRTIDYLRVSITDRCDFRCVYCMAEDMTFLPRADLLTLEELDRLCSAFIAKGVRKLRLTGGEPLVRRNMMSLVRSLSRHLKTGALDELTLTTNGSQLARFAAELADCGVRRVNVSLDTLDPDEFRRITRWGDLERVLAGIDAARTAGLAVKINSVVLKGSNEDEIPSLMRWAHGLGMGLTLIEVMPLGEIGEGRIDQYVPLSLIRARLSANYTLTDLPDSTGGPARYVRVEETGGRLGFITPLTHNFCESCNRVRITCTGTIHTCLGHEDASDLRRPLRASPDDALLSAAIDQAIGSKPKGHDFIIDRRHNRPSVSRHMSVTGG.

The Radical SAM core domain occupies 19–239 (PFGRTIDYLR…ANYTLTDLPD (221 aa)). Position 28 (Arg-28) interacts with GTP. [4Fe-4S] cluster contacts are provided by Cys-35 and Cys-39. Residue Tyr-41 coordinates S-adenosyl-L-methionine. Cys-42 lines the [4Fe-4S] cluster pocket. A GTP-binding site is contributed by Arg-77. An S-adenosyl-L-methionine-binding site is contributed by Gly-81. Thr-111 lines the GTP pocket. Ser-135 lines the S-adenosyl-L-methionine pocket. Lys-171 is a binding site for GTP. Met-205 lines the S-adenosyl-L-methionine pocket. Residues Cys-268 and Cys-271 each contribute to the [4Fe-4S] cluster site. Residue 273 to 275 (RVR) participates in GTP binding. Cys-285 contacts [4Fe-4S] cluster.

Belongs to the radical SAM superfamily. MoaA family. Monomer and homodimer. Requires [4Fe-4S] cluster as cofactor.

It carries out the reaction GTP + AH2 + S-adenosyl-L-methionine = (8S)-3',8-cyclo-7,8-dihydroguanosine 5'-triphosphate + 5'-deoxyadenosine + L-methionine + A + H(+). The protein operates within cofactor biosynthesis; molybdopterin biosynthesis. Catalyzes the cyclization of GTP to (8S)-3',8-cyclo-7,8-dihydroguanosine 5'-triphosphate. The protein is GTP 3',8-cyclase of Rhodopseudomonas palustris (strain ATCC BAA-98 / CGA009).